The following is a 298-amino-acid chain: Acetylglutamate kinase (298 aa).

Residues Gly-69–Gly-70, Arg-91, and Asn-191 each bind substrate.

It belongs to the acetylglutamate kinase family. ArgB subfamily.

It is found in the cytoplasm. The enzyme catalyses N-acetyl-L-glutamate + ATP = N-acetyl-L-glutamyl 5-phosphate + ADP. The protein operates within amino-acid biosynthesis; L-arginine biosynthesis; N(2)-acetyl-L-ornithine from L-glutamate: step 2/4. In terms of biological role, catalyzes the ATP-dependent phosphorylation of N-acetyl-L-glutamate. This chain is Acetylglutamate kinase, found in Neisseria gonorrhoeae (strain ATCC 700825 / FA 1090).